Consider the following 655-residue polypeptide: p-hydroxybenzoic acid efflux pump subunit AaeB (655 aa).

A run of 10 helical transmembrane segments spans residues 13 to 33 (FAVK…HFQL), 38 to 58 (WAVL…GGEP), 69 to 89 (LRII…IAMI), 93 to 113 (LLMI…SSLV), 121 to 141 (WGLA…EPLL), 152 to 172 (EIVI…PRSI), 370 to 390 (LFWL…IAVV), 407 to 427 (FIYG…VIIP), 431 to 451 (QSML…GIEV), and 482 to 502 (FLDS…VILL).

Belongs to the aromatic acid exporter ArAE (TC 2.A.85) family.

It localises to the cell inner membrane. In terms of biological role, forms an efflux pump with AaeA. Could function as a metabolic relief valve, allowing to eliminate certain compounds when they accumulate to high levels in the cell. The polypeptide is p-hydroxybenzoic acid efflux pump subunit AaeB (Shigella dysenteriae serotype 1 (strain Sd197)).